The sequence spans 92 residues: Indole-3-acetic acid-induced protein ARG7 (92 aa).

It belongs to the ARG7 family.

This Vigna radiata var. radiata (Mung bean) protein is Indole-3-acetic acid-induced protein ARG7 (ARG7).